Here is a 298-residue protein sequence, read N- to C-terminus: MATKIELIKELRKTTQASMMDCKKALEQNNDDLEKAIKWLRENGIVKSAKKLGKVAADGCIVLHSDHHKAVMVEINSQTDFVARSQELTDFAQLMISEVFKKATPTTTIEEVTQYELQGKEKVAERLALVASKTDEKIVLRRLMVFESKTNHIFSYLHANKRIGVILEVEGKFDEQDGKHLAMHIAANSPQFIDQDNVDQTWLANETSIIKSQAKLEVQDNPKKAAFLDKTIAGRVNKLLIDICLVNQKYLVDESKTVGQFLKEKNSKVIHFVRFEVGEGIVKEAVDFASEVSAQMKK.

Residues 79–82 (TDFV) form an involved in Mg(2+) ion dislocation from EF-Tu region.

It belongs to the EF-Ts family.

The protein localises to the cytoplasm. Functionally, associates with the EF-Tu.GDP complex and induces the exchange of GDP to GTP. It remains bound to the aminoacyl-tRNA.EF-Tu.GTP complex up to the GTP hydrolysis stage on the ribosome. This is Elongation factor Ts (tsf) from Mycoplasma pneumoniae (strain ATCC 29342 / M129 / Subtype 1) (Mycoplasmoides pneumoniae).